Consider the following 1528-residue polypeptide: Cell surface antigen I/II (1528 aa).

Residues 1 to 50 (MLQKCKLEGIIICNEKRLLGAAKVKSGRTLSGALLGTAILASGAGQKALA) form the signal peptide. A disordered region spans residues 50-156 (AEETSTTSTS…PEIKDDYSKQ (107 aa)). A compositionally biased stretch (low complexity) spans 51–68 (EETSTTSTSGGDTAVVGT). 2 stretches are compositionally biased toward polar residues: residues 83-97 (NPSS…QARQ) and 124-133 (TVSQDATVNK). Positions 142–154 (ANQKEPEIKDDYS) are enriched in basic and acidic residues. 4 Ag I/II A repeats span residues 161-235 (QKAT…QQAN), 236-315 (SDSQ…QAGN), 316-396 (AANE…QSGN), and 397-478 (AANE…KKDL). Disordered stretches follow at residues 840-951 (VPKV…VEPV) and 1459-1480 (SNTV…PKTT). The segment covering 855–879 (TKPDEPTYEVEKELVDLPVEPKYEP) has biased composition (basic and acidic residues). The segment covering 1459–1468 (SNTVRTSTPE) has biased composition (polar residues). An LPXTG sorting signal motif is present at residues 1503 to 1507 (LPATG). Residue Thr1506 is modified to Pentaglycyl murein peptidoglycan amidated threonine. Positions 1507 to 1528 (GDSSNAYLPLLGLVSLTAGFSC) are cleaved as a propeptide — removed by sortase.

Belongs to the antigen I/II family.

The protein localises to the secreted. Its subcellular location is the cell wall. The chain is Cell surface antigen I/II from Streptococcus downei (Streptococcus sobrinus).